The sequence spans 155 residues: MGKEFSGVLNGQGLKIALVVSRFNEFITSKLLSGAKDSLERHGVSADNTDVAWVPGAFEIPLVAQKLAKSGRYDAVVCLGAVIRGSTPHFEYVSSEVSKGIARVGLDAGLPVIFGVITADSIEQAIERAGTKMGNKGFDAATQAIEVANLMKNLT.

5-amino-6-(D-ribitylamino)uracil-binding positions include F23, 57–59 (AFE), and 81–83 (AVI). Position 86-87 (86-87 (ST)) interacts with (2S)-2-hydroxy-3-oxobutyl phosphate. Residue H89 is the Proton donor of the active site. Residue F114 participates in 5-amino-6-(D-ribitylamino)uracil binding. R128 is a (2S)-2-hydroxy-3-oxobutyl phosphate binding site.

Belongs to the DMRL synthase family.

The catalysed reaction is (2S)-2-hydroxy-3-oxobutyl phosphate + 5-amino-6-(D-ribitylamino)uracil = 6,7-dimethyl-8-(1-D-ribityl)lumazine + phosphate + 2 H2O + H(+). The protein operates within cofactor biosynthesis; riboflavin biosynthesis; riboflavin from 2-hydroxy-3-oxobutyl phosphate and 5-amino-6-(D-ribitylamino)uracil: step 1/2. In terms of biological role, catalyzes the formation of 6,7-dimethyl-8-ribityllumazine by condensation of 5-amino-6-(D-ribitylamino)uracil with 3,4-dihydroxy-2-butanone 4-phosphate. This is the penultimate step in the biosynthesis of riboflavin. The sequence is that of 6,7-dimethyl-8-ribityllumazine synthase from Dehalococcoides mccartyi (strain ATCC BAA-2100 / JCM 16839 / KCTC 5957 / BAV1).